A 433-amino-acid polypeptide reads, in one-letter code: PC-esterase domain-containing protein 1B (433 aa).

A disordered region spans residues 386–433; sequence PPCHQRQAPVVHRGFPRHFARGPYSNPWRDRPRRPPKHSPAGLESRPQ.

This sequence belongs to the PC-esterase family.

In Mus musculus (Mouse), this protein is PC-esterase domain-containing protein 1B (Pced1b).